The primary structure comprises 226 residues: Chalcone--flavanone isomerase (226 aa).

Thr47, Asn112, and Ser189 together coordinate substrate.

Belongs to the chalcone isomerase family.

The catalysed reaction is a chalcone = a flavanone.. It participates in secondary metabolite biosynthesis; flavonoid biosynthesis. In terms of biological role, catalyzes the intramolecular cyclization of bicyclic chalcones into tricyclic (S)-flavanones. Responsible for the isomerization of 4,2',4',6'-tetrahydroxychalcone (also termed chalcone) into naringenin. The polypeptide is Chalcone--flavanone isomerase (CHI) (Allium cepa (Onion)).